The following is a 141-amino-acid chain: MADDLVEGLTRAGLPGAKASARYVRVSPTKARRVVDLVRGRSVSEALDILRFAPQAASDDVYKVVASAAANAENNHSLDPATLWVGEVYVDEGPTLKRIRPRAQGRAYRIRKRTSHITVVVESREPVSAAGRGAKTTRRAR.

The protein belongs to the universal ribosomal protein uL22 family. As to quaternary structure, part of the 50S ribosomal subunit.

This protein binds specifically to 23S rRNA; its binding is stimulated by other ribosomal proteins, e.g. L4, L17, and L20. It is important during the early stages of 50S assembly. It makes multiple contacts with different domains of the 23S rRNA in the assembled 50S subunit and ribosome. Functionally, the globular domain of the protein is located near the polypeptide exit tunnel on the outside of the subunit, while an extended beta-hairpin is found that lines the wall of the exit tunnel in the center of the 70S ribosome. This chain is Large ribosomal subunit protein uL22, found in Frankia alni (strain DSM 45986 / CECT 9034 / ACN14a).